The primary structure comprises 223 residues: Urease accessory protein UreF (223 aa).

Belongs to the UreF family. As to quaternary structure, ureD, UreF and UreG form a complex that acts as a GTP-hydrolysis-dependent molecular chaperone, activating the urease apoprotein by helping to assemble the nickel containing metallocenter of UreC. The UreE protein probably delivers the nickel.

The protein localises to the cytoplasm. Required for maturation of urease via the functional incorporation of the urease nickel metallocenter. This is Urease accessory protein UreF from Pseudomonas aeruginosa (strain LESB58).